The following is a 380-amino-acid chain: NF-kappa-B inhibitor-like protein 1 (380 aa).

Positions M1 to E34 are disordered. Over residues A13–S28 the composition is skewed to polar residues. 2 ANK repeats span residues G64–H93 and H97–K133. Disordered regions lie at residues K131–Q167 and E185–L293. Residue S150 is modified to Phosphoserine. The span at S150–A159 shows a compositional bias: acidic residues. 2 stretches are compositionally biased toward basic and acidic residues: residues R204–G221 and R236–V272.

As to quaternary structure, interacts with CACTIN (via N-terminal domain); the interaction occurs in a pro-inflammatory-independent manner.

The protein resides in the nucleus. Functionally, involved in the regulation of innate immune response. Acts as negative regulator of Toll-like receptor and interferon-regulatory factor (IRF) signaling pathways. Contributes to the negative regulation of transcriptional activation of NF-kappa-B target genes in response to endogenous pro-inflammatory stimuli. This chain is NF-kappa-B inhibitor-like protein 1 (NFKBIL1), found in Sus scrofa (Pig).